A 626-amino-acid polypeptide reads, in one-letter code: Chaperone protein HtpG (626 aa).

Residues 1–341 (METKQFKAES…SEDLSLNISR (341 aa)) form an a; substrate-binding region. The b stretch occupies residues 342–552 (EILQHDRQLK…EGELSIEMEK (211 aa)). The disordered stretch occupies residues 490–509 (DLGIEGEEKENTSSSDDKEN). Positions 498-509 (KENTSSSDDKEN) are enriched in basic and acidic residues. The interval 553 to 626 (VLNAMPNNQN…FTNNICKIMK (74 aa)) is c.

This sequence belongs to the heat shock protein 90 family. Homodimer.

The protein localises to the cytoplasm. Its function is as follows. Molecular chaperone. Has ATPase activity. The sequence is that of Chaperone protein HtpG from Clostridium botulinum (strain Loch Maree / Type A3).